The primary structure comprises 190 residues: Thioredoxin F-type, chloroplastic (190 aa).

A disordered region spans residues 1–31; the sequence is MALHLSLSHQSWTSPAHPITSSDPTRSSVPG. The N-terminal 77 residues, 1–77, are a transit peptide targeting the chloroplast; sequence MALHLSLSHQ…SMEQALGTQE (77 aa). A compositionally biased stretch (polar residues) spans 7-30; sequence LSHQSWTSPAHPITSSDPTRSSVP. One can recognise a Thioredoxin domain in the interval 78–189; it reads MEAIVGKVTE…LLEAIQAARS (112 aa). Catalysis depends on nucleophile residues Cys-114 and Cys-117. Cys-114 and Cys-117 form a disulfide bridge.

This sequence belongs to the thioredoxin family. Plant F-type subfamily. Forms a complex with heterodimeric ferredoxin-thioredoxin reductase (FTR) and ferredoxin.

The protein localises to the plastid. It is found in the chloroplast. In terms of biological role, participates in various redox reactions through the reversible oxidation of the active center dithiol to a disulfide. The F form is known to activate a number of enzymes of the photosynthetic carbon cycle. The chain is Thioredoxin F-type, chloroplastic from Spinacia oleracea (Spinach).